Here is a 534-residue protein sequence, read N- to C-terminus: Membrane-bound lytic murein transglycosylase F (534 aa).

Positions 1–24 (MQISQFNRLKRSALLFASVLLLSA) are cleaved as a signal peptide. The tract at residues 25-285 (CQIESEPKSE…TLEEKYIGHI (261 aa)) is non-LT domain. An LT domain region spans residues 287–534 (AFDYVDTRAF…AEQTPVPKAE (248 aa)). Glu330 is a catalytic residue. The tract at residues 507–534 (VSGAVEVTPPPEENAPQEAEQTPVPKAE) is disordered. Low complexity predominate over residues 520–534 (NAPQEAEQTPVPKAE).

The protein in the N-terminal section; belongs to the bacterial solute-binding protein 3 family. It in the C-terminal section; belongs to the transglycosylase Slt family.

It localises to the cell outer membrane. The enzyme catalyses Exolytic cleavage of the (1-&gt;4)-beta-glycosidic linkage between N-acetylmuramic acid (MurNAc) and N-acetylglucosamine (GlcNAc) residues in peptidoglycan, from either the reducing or the non-reducing ends of the peptidoglycan chains, with concomitant formation of a 1,6-anhydrobond in the MurNAc residue.. Its function is as follows. Murein-degrading enzyme that degrades murein glycan strands and insoluble, high-molecular weight murein sacculi, with the concomitant formation of a 1,6-anhydromuramoyl product. Lytic transglycosylases (LTs) play an integral role in the metabolism of the peptidoglycan (PG) sacculus. Their lytic action creates space within the PG sacculus to allow for its expansion as well as for the insertion of various structures such as secretion systems and flagella. This chain is Membrane-bound lytic murein transglycosylase F, found in Vibrio campbellii (strain ATCC BAA-1116).